Reading from the N-terminus, the 398-residue chain is Phosphoglycerate kinase (398 aa).

Substrate is bound by residues 21 to 23 (DFN), R36, 59 to 62 (HLGR), R119, and R157. ATP is bound by residues K208, G296, E327, and 354–357 (GGDS).

It belongs to the phosphoglycerate kinase family. Monomer.

It is found in the cytoplasm. The enzyme catalyses (2R)-3-phosphoglycerate + ATP = (2R)-3-phospho-glyceroyl phosphate + ADP. It functions in the pathway carbohydrate degradation; glycolysis; pyruvate from D-glyceraldehyde 3-phosphate: step 2/5. The protein is Phosphoglycerate kinase (pgk) of Streptococcus pyogenes serotype M1.